A 219-amino-acid chain; its full sequence is Response regulator ArlR (219 aa).

A Response regulatory domain is found at 3-116; sequence NILIVEDEQN…ELLARIRAVL (114 aa). Asp52 carries the post-translational modification 4-aspartylphosphate. A DNA-binding region (ompR/PhoB-type) is located at residues 122–219; sequence KDVLDINGII…TVRGVGYVIR (98 aa).

Phosphorylated by ArlS.

The protein resides in the cytoplasm. Functionally, member of the two-component regulatory system ArlS/ArlR. This is Response regulator ArlR (arlR) from Staphylococcus epidermidis (strain ATCC 12228 / FDA PCI 1200).